Here is a 154-residue protein sequence, read N- to C-terminus: Myoglobin (154 aa).

The Globin domain occupies 2–148 (GLSDAEWQLV…FRNDIAAQYK (147 aa)). S4 is modified (phosphoserine). Position 65 (H65) interacts with nitrite. H65 is a binding site for O2. The residue at position 68 (T68) is a Phosphothreonine. A heme b-binding site is contributed by H94.

It belongs to the globin family. As to quaternary structure, monomeric.

It is found in the cytoplasm. The protein resides in the sarcoplasm. The catalysed reaction is Fe(III)-heme b-[protein] + nitric oxide + H2O = Fe(II)-heme b-[protein] + nitrite + 2 H(+). It carries out the reaction H2O2 + AH2 = A + 2 H2O. Functionally, monomeric heme protein which primary function is to store oxygen and facilitate its diffusion within muscle tissues. Reversibly binds oxygen through a pentacoordinated heme iron and enables its timely and efficient release as needed during periods of heightened demand. Depending on the oxidative conditions of tissues and cells, and in addition to its ability to bind oxygen, it also has a nitrite reductase activity whereby it regulates the production of bioactive nitric oxide. Under stress conditions, like hypoxia and anoxia, it also protects cells against reactive oxygen species thanks to its pseudoperoxidase activity. This is Myoglobin (MB) from Oryctolagus cuniculus (Rabbit).